Reading from the N-terminus, the 475-residue chain is MPAQTESKTTTEFKAGVKDYKITYYTPDYKVSDTDVLAAFRMTPQTGVTPEECGAAVAAESSTGTWTTVWTDGLTQLDRYKGRCYDIEPVYGECDQYIAYIAYPIELFEEGSVTNLLTSIVGNVFGFKALRALRLEDLRIPACYLKSFWGPPHGIEVERDKLCKYGRGLLGCTIKPKLGLSAKNYGRAVYECLRGGLDFTKDDENVTSQAFMRWRDRFLFCAEAIYKAQKESGEVKGHYLNVTAGNCEEMYKRADYAVKLGVPIIMHDFLTGGFTANTSLSNYCRNNGLLLHIHRAMHAVIDRQRNHGIHFRVLAKTLRMSGGDHLHSGTVVGKLEGDRAGTYGFINLMRQNLIYRDRACGVYFAQDWCGLASLMPVASGGIHVWHMPALLDIFGDDTCFQFGGGTLGHPWGNASGAVANRVALEACTQARNEGKSLVKYGADIIREACKYSRELAAACDVWKEVTFNFDTVDKL.

N6,N6,N6-trimethyllysine is present on Lys14. Residues Asn123 and Thr173 each contribute to the substrate site. Lys175 acts as the Proton acceptor in catalysis. Lys177 serves as a coordination point for substrate. Lys201, Asp203, and Glu204 together coordinate Mg(2+). An N6-carboxylysine modification is found at Lys201. His294 serves as the catalytic Proton acceptor. Residues Arg295, His327, and Ser379 each contribute to the substrate site.

It belongs to the RuBisCO large chain family. Type I subfamily. As to quaternary structure, heterohexadecamer of 8 large chains and 8 small chains; disulfide-linked. The disulfide link is formed within the large subunit homodimers. Requires Mg(2+) as cofactor. Post-translationally, the disulfide bond which can form in the large chain dimeric partners within the hexadecamer appears to be associated with oxidative stress and protein turnover.

The protein resides in the plastid. The catalysed reaction is 2 (2R)-3-phosphoglycerate + 2 H(+) = D-ribulose 1,5-bisphosphate + CO2 + H2O. It carries out the reaction D-ribulose 1,5-bisphosphate + O2 = 2-phosphoglycolate + (2R)-3-phosphoglycerate + 2 H(+). In terms of biological role, ruBisCO catalyzes two reactions: the carboxylation of D-ribulose 1,5-bisphosphate, the primary event in carbon dioxide fixation, as well as the oxidative fragmentation of the pentose substrate in the photorespiration process. Both reactions occur simultaneously and in competition at the same active site. The chain is Ribulose bisphosphate carboxylase large chain (rbcL) from Euglena longa (Euglenophycean alga).